A 242-amino-acid polypeptide reads, in one-letter code: Probable transcriptional regulatory protein LSL_0422 (242 aa).

The tract at residues 1 to 21 is disordered; sequence MSGHSKWHNIQGRKNAQDAKR.

Belongs to the TACO1 family.

The protein localises to the cytoplasm. The sequence is that of Probable transcriptional regulatory protein LSL_0422 from Ligilactobacillus salivarius (strain UCC118) (Lactobacillus salivarius).